Consider the following 819-residue polypeptide: Leucine--tRNA ligase (819 aa).

Positions 42–52 (PYPSGRLHMGH) match the 'HIGH' region motif. The 'KMSKS' region motif lies at 577 to 581 (KMSKS). Position 580 (lysine 580) interacts with ATP.

This sequence belongs to the class-I aminoacyl-tRNA synthetase family.

It localises to the cytoplasm. It carries out the reaction tRNA(Leu) + L-leucine + ATP = L-leucyl-tRNA(Leu) + AMP + diphosphate. The polypeptide is Leucine--tRNA ligase (Saccharophagus degradans (strain 2-40 / ATCC 43961 / DSM 17024)).